A 266-amino-acid chain; its full sequence is Phosphoethanolamine N-methyltransferase (266 aa).

Phosphoethanolamine is bound at residue Gln18. Residue Tyr19 is part of the active site. Position 27 (Tyr27) interacts with phosphoethanolamine. Residues Ile36, Ser37, Gly63, Asp85, Ile86, Asp110, Ile111, and Arg127 each contribute to the S-adenosyl-L-methionine site. Residue His132 is part of the active site. Phosphoethanolamine is bound by residues Tyr160, Tyr175, Arg179, Tyr181, and Lys247.

Belongs to the class I-like SAM-binding methyltransferase superfamily. PEAMT family. In terms of assembly, monomer.

The protein localises to the golgi apparatus membrane. It localises to the cytoplasm. The enzyme catalyses phosphoethanolamine + S-adenosyl-L-methionine = N-methylethanolamine phosphate + S-adenosyl-L-homocysteine + H(+). It carries out the reaction N-methylethanolamine phosphate + S-adenosyl-L-methionine = N,N-dimethylethanolamine phosphate + S-adenosyl-L-homocysteine + H(+). It catalyses the reaction N,N-dimethylethanolamine phosphate + S-adenosyl-L-methionine = phosphocholine + S-adenosyl-L-homocysteine + H(+). It participates in phospholipid metabolism; phosphatidylcholine biosynthesis; phosphocholine from phosphoethanolamine. With respect to regulation, inhibited by phosphocholine. Inhibited by hexadecylphosphocholine (miltefosine). Inhibited by S-adenosyl-l-homocysteine. Weakly inhibited in vitro by amodiaquine, chloroquine and primaquine. Inhibited by NSC-158011. Its function is as follows. Catalyzes N-methylation of phosphoethanolamine, phosphomonomethylethanolamine and phosphodimethylethanolamine, the three methylation steps required to convert phosphoethanolamine to phosphocholine. Has no ethanolamine- or phosphatidylethanolamine-N-methyltransferase activity. Required for gametocyte development, maturation and transmission to mosquitoes and for oocyst formation in the mosquito midgut. This Plasmodium falciparum (isolate 3D7) protein is Phosphoethanolamine N-methyltransferase.